The primary structure comprises 729 residues: Solute carrier family 15 member 2 (729 aa).

Positions 1-34 are disordered; the sequence is MNPFQKNESKETLFSPVSIEEVPPRPPSPPKKPS. Residues 1–57 lie on the Cytoplasmic side of the membrane; the sequence is MNPFQKNESKETLFSPVSIEEVPPRPPSPPKKPSPTICGSNYPLSIAFIVVNEFCER. S9 carries the post-translational modification Phosphoserine. Phosphothreonine is present on T12. Over residues 24–33 the composition is skewed to pro residues; that stretch reads PRPPSPPKKP. A Phosphoserine modification is found at S28. A helical transmembrane segment spans residues 58-78; the sequence is FSYYGMKAVLILYFLYFLHWN. Over 79–83 the chain is Extracellular; the sequence is EDTST. Residues 84 to 104 form a helical membrane-spanning segment; the sequence is SIYHAFSSLCYFTPILGAAIA. Residues 105-113 are Cytoplasmic-facing; the sequence is DSWLGKFKT. A helical membrane pass occupies residues 114–134; it reads IIYLSLVYVLGHVIKSLGALP. Topologically, residues 135–139 are extracellular; that stretch reads ILGGQ. A helical membrane pass occupies residues 140–160; it reads VVHTVLSLIGLSLIALGTGGI. Topologically, residues 161-183 are cytoplasmic; the sequence is KPCVAAFGGDQFEEKHAEERTRY. The chain crosses the membrane as a helical span at residues 184–204; the sequence is FSVFYLSINAGSLISTFITPM. The Extracellular portion of the chain corresponds to 205-217; it reads LRGDVQCFGEDCY. A helical transmembrane segment spans residues 218 to 238; the sequence is ALAFGVPGLLMVIALVVFAMG. Over 239-295 the chain is Cytoplasmic; the sequence is SKIYNKPPPEGNIVAQVFKCIWFAISNRFKNRSGDIPKRQHWLDWAAEKYPKQLIMD. A helical transmembrane segment spans residues 296–316; it reads VKALTRVLFLYIPLPMFWALL. Topologically, residues 317-343 are extracellular; it reads DQQGSRWTLQAIRMNRNLGFFVLQPDQ. The helical transmembrane segment at 344–364 threads the bilayer; sequence MQVLNPLLVLIFIPLFDFVIY. The Cytoplasmic portion of the chain corresponds to 365–380; it reads RLVSKCGINFSSLRKM. Residues 381–401 form a helical membrane-spanning segment; the sequence is AVGMILACLAFAVAAAVEIKI. Topologically, residues 402 to 611 are extracellular; it reads NEMAPAQPGP…PANKMSIAWQ (210 aa). The extracellular domain (ECD) stretch occupies residues 402-611; that stretch reads NEMAPAQPGP…PANKMSIAWQ (210 aa). Residues N435, N472, N528, N567, and N587 are each glycosylated (N-linked (GlcNAc...) asparagine). Residues 612 to 632 traverse the membrane as a helical segment; that stretch reads LPQYALVTAGEVMFSVTGLEF. At 633 to 643 the chain is on the cytoplasmic side; that stretch reads SYSQAPSSMKS. Residues 644–664 traverse the membrane as a helical segment; sequence VLQAAWLLTIAVGNIIVLVVA. Over 665–674 the chain is Extracellular; the sequence is QFSGLVQWAE. A helical membrane pass occupies residues 675–695; the sequence is FILFSCLLLVICLIFSIMGYY. The Cytoplasmic segment spans residues 696–729; sequence YVPVKTEDMRGPADKHIPHIQGNMIKLETKKTKL.

It belongs to the major facilitator superfamily. Proton-dependent oligopeptide transporter (POT/PTR) (TC 2.A.17) family. In terms of assembly, interacts (via extracellular domain region) with trypsin. As to expression, expressed in kidney. Not detected in intestine. Highly expressed in macrophages.

The protein resides in the apical cell membrane. The protein localises to the cytoplasmic vesicle. Its subcellular location is the phagosome membrane. It localises to the cell membrane. The catalysed reaction is a dipeptide(out) + 2 H(+)(out) = a dipeptide(in) + 2 H(+)(in). It catalyses the reaction N-acetyl-D-muramoyl-L-alanyl-D-isoglutamine(out) + 3 H(+)(out) = N-acetyl-D-muramoyl-L-alanyl-D-isoglutamine(in) + 3 H(+)(in). The enzyme catalyses glycyl-L-leucine(out) + 2 H(+)(out) = glycyl-L-leucine(in) + 2 H(+)(in). It carries out the reaction glycyl-L-lysine(out) + 2 H(+)(out) = glycyl-L-lysine(in) + 2 H(+)(in). The catalysed reaction is glycyl-L-glutamate(out) + 3 H(+)(out) = glycyl-L-glutamate(in) + 3 H(+)(in). It catalyses the reaction L-alanyl-L-alanine(out) + 2 H(+)(out) = L-alanyl-L-alanine(in) + 2 H(+)(in). The enzyme catalyses an L-amino acid tripeptide(out) + 2 H(+)(out) = an L-amino acid tripeptide(in) + 2 H(+)(in). It carries out the reaction carnosine(out) + 2 H(+)(out) = carnosine(in) + 2 H(+)(in). In terms of biological role, proton-coupled amino-acid transporter that transports oligopeptides of 2 to 4 amino acids with a preference for dipeptides. Transports neutral and anionic dipeptides with a proton to peptide stoichiometry of 2:1 or 3:1. In kidney, involved in the absorption of circulating di- and tripeptides from the glomerular filtrate. Can also transport beta-lactam antibiotics, such as the aminocephalosporin cefadroxil, and other antiviral and anticancer drugs. Transports the dipeptide-like aminopeptidase inhibitor bestatin. Also able to transport carnosine. Involved in innate immunity by promoting the detection of microbial pathogens by NOD-like receptors (NLRs). Mediates transport of bacterial peptidoglycans across the plasma membrane or, in macrophages, the phagosome membrane: catalyzes the transport of certain bacterial peptidoglycans, such as muramyl dipeptide (MDP), the NOD2 ligand. This is Solute carrier family 15 member 2 from Homo sapiens (Human).